Reading from the N-terminus, the 192-residue chain is Immunity protein YqcF (192 aa).

Probably interacts with cognate toxin YqcG but not with other non-cognate toxins. The interaction inhibits the toxic activity of YqcG.

The protein resides in the cytoplasm. In terms of biological role, immunity component of one of 6 LXG toxin-immunity modules in this strain. They promote kin selection, mediate competition in biofilms, and drive spatial segregation of different strains, indicating that LXG toxins may help avoid warfare between strains in biofilms. Mediates intercellular competition during biofilm formation; disruption of the operon disadvantages the bacteria, but overexpression of the cognate immunity protein restores growth in competition with wild-type. In situ neutralizes the toxic effect of cognate toxin YqcG. Neutralizes the toxic activity of cognate toxin YqcG upon expression in E.coli. Does not have immunity protein activity on other LXG toxins. The sequence is that of Immunity protein YqcF (yqcF) from Bacillus subtilis (strain 168).